The following is a 750-amino-acid chain: uncharacterized protein (750 aa).

N61, N84, N115, N154, N176, N197, N207, N228, N241, N267, N293, N299, N312, N335, N351, N373, N389, and N519 each carry an N-linked (GlcNAc...) asparagine glycan. 2 positions are modified to phosphoserine: S675 and S678. K697 is covalently cross-linked (Glycyl lysine isopeptide (Lys-Gly) (interchain with G-Cter in ubiquitin)). Polar residues-rich tracts occupy residues 703 to 726 (EITA…SNRT) and 736 to 750 (KDSN…HLVA). The interval 703 to 750 (EITAIDNSSSANNTDVTGSTSNRTELSHPDVTPKDSNGPVNNNAHLVA) is disordered. N-linked (GlcNAc...) asparagine glycans are attached at residues N709, N714, and N724.

In terms of processing, N-glycosylated.

The protein resides in the mitochondrion. This is an uncharacterized protein from Saccharomyces cerevisiae (strain ATCC 204508 / S288c) (Baker's yeast).